A 175-amino-acid polypeptide reads, in one-letter code: Adenine phosphoribosyltransferase (175 aa).

This sequence belongs to the purine/pyrimidine phosphoribosyltransferase family. In terms of assembly, homodimer.

The protein localises to the cytoplasm. The enzyme catalyses AMP + diphosphate = 5-phospho-alpha-D-ribose 1-diphosphate + adenine. It functions in the pathway purine metabolism; AMP biosynthesis via salvage pathway; AMP from adenine: step 1/1. Catalyzes a salvage reaction resulting in the formation of AMP, that is energically less costly than de novo synthesis. This Francisella philomiragia subsp. philomiragia (strain ATCC 25017 / CCUG 19701 / FSC 153 / O#319-036) protein is Adenine phosphoribosyltransferase.